A 455-amino-acid polypeptide reads, in one-letter code: Acetylcholinesterase collagenic tail peptide (455 aa).

An N-terminal signal peptide occupies residues 1–22; that stretch reads MVVLNPMTLGIYLQLFFLSIVS. Positions 51-67 are PRAD; it reads CCLLTPPPPPLFPPPFF. The segment at 90–282 is disordered; sequence QSPCMQGSLG…QLIMGPKGER (193 aa). Collagen-like domains follow at residues 96–269 and 277–291; these read GSLG…PGPP and GPKG…PGRC. Residues 101-112 are compositionally biased toward pro residues; it reads PGPPGPQGPPGL. Residues 118 to 127 are compositionally biased toward basic and acidic residues; sequence PKGEKGELGR. Positions 130–133 are heparan sulfate proteoglycan binding; that stretch reads RKGR. The segment covering 134–152 has biased composition (pro residues); sequence PGPPGVPGMPGPIGWPGPE. A compositionally biased stretch (basic and acidic residues) spans 182 to 200; the sequence is RGEKGSRGEKGDLGPKGEK. Positions 235-238 are heparan sulfate proteoglycan binding; that stretch reads KRGK. Pro residues predominate over residues 262-271; sequence RPGPPGPPPA.

It belongs to the COLQ family. Homotrimer. Component of the asymmetric form of AChE, a disulfide-bonded oligomer composed of the collagenic subunits (Q) and a variable number of asymmetric catalytic subunits (T). The N-terminal of a collagenic subunit (Q) associates with the C-terminal of a catalytic subunit (T). The triple-helical tail is stabilized by disulfide bonds at each end. In terms of tissue distribution, found at the end plate of skeletal muscle.

It is found in the synapse. Anchors the catalytic subunits of asymmetric AChE to the synaptic basal lamina. The protein is Acetylcholinesterase collagenic tail peptide (COLQ) of Homo sapiens (Human).